The chain runs to 43 residues: MALLDLQAMDTPAEDSFGELATGSQVSLLVCEYSSLSVVLCTP.

The first 21 residues, 1 to 21 (MALLDLQAMDTPAEDSFGELA), serve as a signal peptide directing secretion. Cross-links (lanthionine (Ser-Cys)) lie at residues 24-31 (SQVSLLVC) and 34-41 (SSLSVVLC). 2 positions are modified to 2,3-didehydroalanine (Ser): Ser27 and Ser37.

It belongs to the lanthionine-containing morphogen protein family. Maturation involves the enzymatic conversion of Ser into dehydrated AA and the formation of thioether bonds with cysteine. This is followed by membrane translocation and cleavage of the modified precursor.

Functionally, lanthionine-containing peptide devoid of antibiotic properties, involved in the formation of aerial mycelium. Suggested to self-assemble at air-water interfaces, thus providing a film of surfactant through which nascent aerial hyphae can emerge. The aerial hyphae differentiate further into spores. The sequence is that of Lanthionine-containing peptide SapB (ramS) from Streptomyces griseus subsp. griseus (strain JCM 4626 / CBS 651.72 / NBRC 13350 / KCC S-0626 / ISP 5235).